The primary structure comprises 128 residues: Putative histidinol dehydrogenase (128 aa).

The disordered stretch occupies residues 21–84; that stretch reads QRPDIAPRHH…EGQEKASGRR (64 aa). Basic and acidic residues-rich tracts occupy residues 34 to 50 and 72 to 81; these read HRAEREAVEADRSRRTA and QGREGQEKAS.

It belongs to the histidinol dehydrogenase family.

The catalysed reaction is L-histidinol + 2 NAD(+) + H2O = L-histidine + 2 NADH + 3 H(+). It participates in amino-acid biosynthesis; L-histidine biosynthesis; L-histidine from 5-phospho-alpha-D-ribose 1-diphosphate: step 9/9. In terms of biological role, catalyzes the sequential NAD-dependent oxidations of L-histidinol to L-histidinaldehyde and then to L-histidine. This chain is Putative histidinol dehydrogenase (hisD), found in Azospirillum brasilense.